The sequence spans 409 residues: Mitochondrial protein import protein MAS5 (409 aa).

The tract at residues 1–172 is necessary for HAP1 repression in the absence of heme; the sequence is MVKETKFYDI…NGQGIKFVTR (172 aa). In terms of domain architecture, J spans 4–72; it reads ETKFYDILGV…RDIYDQFGED (69 aa). Substrate is bound by residues Ile116 and 135–137; that span reads LAL. The CR-type zinc-finger motif lies at 130-213; that stretch reads GRTAKLALNK…CNGKKVENER (84 aa). Positions 143, 146, 159, 162, 185, and 188 each coordinate Zn(2+). 3 CXXCXGXG motif repeats span residues 143–150, 159–166, and 185–192; these read CKECEGRG, CTSCNGQG, and CDVCHGTG. Lys198 participates in a covalent cross-link: Glycyl lysine isopeptide (Lys-Gly) (interchain with G-Cter in ubiquitin). The Zn(2+) site is built by Cys201 and Cys204. One copy of the CXXCXGXG motif repeat lies at 201-208; sequence CKSCNGKK. Residues 215–216 and 247–249 each bind substrate; these read IL and VVF. Positions 382-409 are disordered; the sequence is RTRASRGGANYDSDEEEQGGEGVQCASQ. At Cys406 the chain carries Cysteine methyl ester. Cys406 carries the S-farnesyl cysteine lipid modification. Positions 407 to 409 are cleaved as a propeptide — removed in mature form; the sequence is ASQ.

As to quaternary structure, homodimer. Interacts with HAP1. Component of the HMC including HAP1, SRO9 and YDJ1.

It localises to the cytoplasm. The protein localises to the perinuclear region. Functionally, probably involved in mitochondrial protein import. Is also required for efficient translocation of pre-pro-alpha-factor. Involved in heme regulation of HAP1, as a component of the high-molecular-weight (HMC) complex. The sequence is that of Mitochondrial protein import protein MAS5 (YDJ1) from Saccharomyces cerevisiae (strain ATCC 204508 / S288c) (Baker's yeast).